A 183-amino-acid chain; its full sequence is MAASMARGGVSARVLLQAARGTWWNRPGGTSGSGEGVALGTTRKFQATGSRPAGEEDAGGPERPGDVVNVVFVDRSGQRIPVSGRVGDNVLHLAQRHGVDLEGACEASLACSTCHVYVSEDHLDLLPPPEEREDDMLDMAPLLQENSRLGCQIVLTPELEGAEFTLPKITRNFYVDGHVPKPH.

Residues 1–52 constitute a mitochondrion transit peptide; it reads MAASMARGGVSARVLLQAARGTWWNRPGGTSGSGEGVALGTTRKFQATGSRP. The disordered stretch occupies residues 45 to 65; sequence FQATGSRPAGEEDAGGPERPG. The 2Fe-2S ferredoxin-type domain maps to 68 to 170; that stretch reads VNVVFVDRSG…GAEFTLPKIT (103 aa). The [2Fe-2S] cluster site is built by Cys105, Cys111, Cys114, and Cys151.

It belongs to the adrenodoxin/putidaredoxin family. As to quaternary structure, component of the mitochondrial core iron-sulfur cluster (ISC) complex composed of NFS1, LYRM4, NDUFAB1, ISCU, FXN, and FDX2; this complex is a heterohexamer containing two copies of each monomer. Form a heterodimer complex with NFS1. Interacts (in both their reduced and oxidized states) with the cysteine desulfurase complex; this interaction stimulates cysteine desulfurase activity, and serves as a reductant for Fe-S cluster assembly. [2Fe-2S] cluster serves as cofactor. Widely expressed, with highest levels in testis, kidney and brain (at protein level). Expressed in muscle (at protein level). Expressed in fibroblasts (at protein level).

The protein resides in the mitochondrion. The protein localises to the mitochondrion matrix. In terms of biological role, electron donor, of the core iron-sulfur cluster (ISC) assembly complex, that acts to reduce the persulfide into sulfide during [2Fe-2S] clusters assembly on the scaffolding protein ISCU. The core iron-sulfur cluster (ISC) assembly complex is involved in the de novo synthesis of a [2Fe-2S] cluster, the first step of the mitochondrial iron-sulfur protein biogenesis. This process is initiated by the cysteine desulfurase complex (NFS1:LYRM4:NDUFAB1) that produces persulfide which is delivered on the scaffold protein ISCU in a FXN-dependent manner. Then this complex is stabilized by FDX2 which provides reducing equivalents to accomplish the [2Fe-2S] cluster assembly. Finally, the [2Fe-2S] cluster is transferred from ISCU to chaperone proteins, including HSCB, HSPA9 and GLRX5. Essential for coenzyme Q biosynthesis: together with FDXR, transfers the electrons required for the hydroxylation reaction performed by COQ6. The protein is Ferredoxin-2, mitochondrial of Homo sapiens (Human).